The primary structure comprises 998 residues: Mis18-binding protein 1 (998 aa).

Lysine 7 participates in a covalent cross-link: Glycyl lysine isopeptide (Lys-Gly) (interchain with G-Cter in SUMO2). Phosphoserine is present on residues serine 9, serine 109, and serine 134. The tract at residues 122–153 (QRDKQEQLTRSSSMLGSPQGEHTKDFPPNTDK) is disordered. The span at 142 to 153 (EHTKDFPPNTDK) shows a compositional bias: basic and acidic residues. Phosphoserine is present on residues serine 169 and serine 258. The SANTA domain occupies 336–422 (VHLQEWMIKV…MFGFPHNWKE (87 aa)). Disordered regions lie at residues 438–460 (KTRQETARVQEKQKSKKKDAEDK) and 476–502 (DNSLERTEVPTDPLNSLEQPTSGKERR). Positions 488 to 497 (PLNSLEQPTS) are enriched in polar residues. Phosphothreonine occurs at positions 516 and 578. Serine 638 and serine 639 each carry phosphoserine. The tract at residues 638-660 (SSEENEVEIKSRTRARNTKERLN) is disordered. Residues 644–660 (VEIKSRTRARNTKERLN) are compositionally biased toward basic and acidic residues. Residue threonine 688 is modified to Phosphothreonine. Lysine 707 participates in a covalent cross-link: Glycyl lysine isopeptide (Lys-Gly) (interchain with G-Cter in SUMO2). Position 726 is a phosphoserine (serine 726). The SANT domain occupies 741–796 (TDDEEWSEQELQKLHCAFTSLPKHKPGFWSDVAMAVGSRTADECQKKYTEEPQGQG). Lysine 765 participates in a covalent cross-link: Glycyl lysine isopeptide (Lys-Gly) (interchain with G-Cter in SUMO2). A disordered region spans residues 784-821 (CQKKYTEEPQGQGSRKHGSKKKQANKVQNGEKDSADAK). Basic residues predominate over residues 797–807 (SRKHGSKKKQA). The span at 812 to 821 (NGEKDSADAK) shows a compositional bias: basic and acidic residues. Glycyl lysine isopeptide (Lys-Gly) (interchain with G-Cter in SUMO2) cross-links involve residues lysine 821, lysine 828, and lysine 847. Serine 872 bears the Phosphoserine mark. Residue lysine 948 forms a Glycyl lysine isopeptide (Lys-Gly) (interchain with G-Cter in SUMO2) linkage. Phosphoserine is present on residues serine 955 and serine 985. Positions 976–998 (SKYFIDDTESDEEEKDYYFSNSD) are disordered. Acidic residues predominate over residues 981 to 990 (DDTESDEEEK).

As to quaternary structure, interacts with SP1. Interacts with MIS18A. Identified in a complex containing MIS18A, OIP5/MIS18B, MIS18BP1, RBBP7 and RBBP4. Interacts with KAT7/HBO1. Interacts (via N-terminus) with FLNA (via N-terminus).

It is found in the nucleus. It localises to the chromosome. Its subcellular location is the centromere. Required for recruitment of CENPA to centromeres and normal chromosome segregation during mitosis. The polypeptide is Mis18-binding protein 1 (Mis18bp1) (Mus musculus (Mouse)).